The sequence spans 206 residues: Outer-membrane lipoprotein LolB (206 aa).

The N-terminal stretch at 1 to 21 is a signal peptide; sequence MHERNYAVFRLLPLASLLLAA. C22 carries the N-palmitoyl cysteine lipid modification. Residue C22 is the site of S-diacylglycerol cysteine attachment.

The protein belongs to the LolB family. In terms of assembly, monomer.

The protein localises to the cell outer membrane. In terms of biological role, plays a critical role in the incorporation of lipoproteins in the outer membrane after they are released by the LolA protein. This is Outer-membrane lipoprotein LolB from Sodalis glossinidius (strain morsitans).